The following is a 328-amino-acid chain: Carbonic anhydrase-related protein 11 (328 aa).

A signal peptide spans 1 to 23; it reads MGAAPRLSAPRVLVLWAALGAAA. An Alpha-carbonic anhydrase domain is found at 33–303; it reads DWWSYKDNLQ…LAHRALRGNR (271 aa). N-linked (GlcNAc...) asparagine glycosylation occurs at asparagine 118. Positions 300-328 are disordered; sequence RGNRDPRHPERRCRGPNYRLHVDDVPHGL. The span at 319–328 shows a compositional bias: basic and acidic residues; it reads LHVDDVPHGL.

The protein belongs to the alpha-carbonic anhydrase family.

Its subcellular location is the secreted. Does not have a catalytic activity. This chain is Carbonic anhydrase-related protein 11 (CA11), found in Ovis aries (Sheep).